The following is a 46-amino-acid chain: Spectrin alpha chain, non-erythrocytic 1 (46 aa).

Spectrin repeat units lie at residues 1–5 (AQLAD), 7–14 (FHLQQFFR), 15–20 (SQLLGS), 21–26 (AHEVQR), 27–35 (LAQFVEHWK), and 39–46 (DLFLTFAK).

This sequence belongs to the spectrin family. As to quaternary structure, associates with the gamma-tubulin complex in brain, but not in kidney, liver, sperm, or uterus. Like erythrocyte spectrin, the spectrin-like proteins are capable of forming dimers which can further associate to tetramers. Interacts with isoform 1 of ACP1. Interacts with CALM and EMD. Interacts (via C-terminal spectrin repeats) with TRPC4. Identified in a complex with ACTN4, CASK, IQGAP1, MAGI2, NPHS1 and SPTBN1. Interacts with CLN3; this interaction regulates the fodrin localization at the plasma membrane.

Its subcellular location is the cytoplasm. It localises to the cytoskeleton. The protein localises to the cell cortex. Fodrin, which seems to be involved in secretion, interacts with calmodulin in a calcium-dependent manner and is thus candidate for the calcium-dependent movement of the cytoskeleton at the membrane. The polypeptide is Spectrin alpha chain, non-erythrocytic 1 (SPTAN1) (Capra hircus (Goat)).